The following is a 102-amino-acid chain: Putative RNA-binding protein RbpA (102 aa).

Residues 2–79 enclose the RRM domain; that stretch reads SIYVGNLSYE…RDLKVNKAKP (78 aa). Residues 73–84 are compositionally biased toward basic and acidic residues; it reads KVNKAKPREDRG. Positions 73–102 are disordered; it reads KVNKAKPREDRGPSGGNRGGYGGGGGRNRY. Residues 85–102 show a composition bias toward gly residues; the sequence is PSGGNRGGYGGGGGRNRY.

This is Putative RNA-binding protein RbpA (rbpA) from Nostoc sp. (strain PCC 7120 / SAG 25.82 / UTEX 2576).